The chain runs to 214 residues: UPF0502 protein Acid345_3645 (214 aa).

The protein belongs to the UPF0502 family.

This is UPF0502 protein Acid345_3645 from Koribacter versatilis (strain Ellin345).